Reading from the N-terminus, the 91-residue chain is Conotoxin VnMKLT1-021 (91 aa).

Positions 1 to 22 (MKLTCVMIVAVLFLTAWTFVTA) are cleaved as a signal peptide. Residues 23 to 57 (DDPRDGPDTAVGWRKLFSEARDEMKNREASKLNER) constitute a propeptide that is removed on maturation. 3 disulfides stabilise this stretch: C59–C78, C66–C82, and C77–C86.

This sequence belongs to the conotoxin O1 superfamily. As to expression, expressed by the venom duct.

It is found in the secreted. This chain is Conotoxin VnMKLT1-021, found in Conus ventricosus (Mediterranean cone).